Reading from the N-terminus, the 601-residue chain is UvrABC system protein C (601 aa).

Residues threonine 17–isoleucine 95 enclose the GIY-YIG domain. A UVR domain is found at serine 204–valine 239.

It belongs to the UvrC family. As to quaternary structure, interacts with UvrB in an incision complex.

It is found in the cytoplasm. In terms of biological role, the UvrABC repair system catalyzes the recognition and processing of DNA lesions. UvrC both incises the 5' and 3' sides of the lesion. The N-terminal half is responsible for the 3' incision and the C-terminal half is responsible for the 5' incision. This chain is UvrABC system protein C, found in Chromobacterium violaceum (strain ATCC 12472 / DSM 30191 / JCM 1249 / CCUG 213 / NBRC 12614 / NCIMB 9131 / NCTC 9757 / MK).